Consider the following 490-residue polypeptide: GTPase Der (490 aa).

EngA-type G domains lie at Pro-3 to Leu-166 and Ile-203 to Thr-376. GTP is bound by residues Gly-9–Ser-16, Asp-56–Ile-60, Asn-118–Asp-121, Gly-209–Ser-216, Asp-256–Val-260, and Asn-321–Asp-324. Residues Arg-377–Glu-461 form the KH-like domain.

Belongs to the TRAFAC class TrmE-Era-EngA-EngB-Septin-like GTPase superfamily. EngA (Der) GTPase family. In terms of assembly, associates with the 50S ribosomal subunit.

GTPase that plays an essential role in the late steps of ribosome biogenesis. The protein is GTPase Der of Shigella flexneri serotype 5b (strain 8401).